The following is a 732-amino-acid chain: Exonuclease 1 (732 aa).

Positions 1-99 (MGITGLIPFV…KRRRDSRKQS (99 aa)) are N-domain. Mg(2+)-binding residues include Asp30, Asp78, Glu150, Asp152, Asp171, Asp173, and Asp226. Residues 138 to 230 (RSRNVDCIVA…ILSGCDYLDS (93 aa)) are I-domain. 3 disordered regions span residues 422 to 471 (YSFK…QRSP), 524 to 625 (DEQT…TNST), and 661 to 716 (SCSS…VSQN). Residues Ser431 and Ser433 each carry the phosphoserine modification. The span at 432–442 (PSREDSVDQER) shows a compositional bias: basic and acidic residues. Thr443 bears the Phosphothreonine mark. At Ser447 the chain carries Phosphoserine. Composition is skewed to basic and acidic residues over residues 457–467 (FAKERTGEEAN) and 525–537 (EQTRLQREHLRDT). Polar residues-rich tracts occupy residues 572–593 (RCSSQISDGETDTDTTASSLLE) and 608–625 (DLNNSQPQIPTEGNTNST). The segment covering 661–677 (SCSSDQRASSTSSSSQQ) has biased composition (low complexity). The span at 703-716 (KSRTNGKLGAVSQN) shows a compositional bias: polar residues.

It belongs to the XPG/RAD2 endonuclease family. EXO1 subfamily. The cofactor is Mg(2+). As to expression, specifically expressed in the female germline.

It is found in the nucleus. Functionally, 5'-&gt;3' double-stranded DNA exonuclease which may also contain a cryptic 3'-&gt;5' double-stranded DNA exonuclease activity. Also exhibits endonuclease activity against 5'-overhanging flap structures similar to those generated by displacement synthesis when DNA polymerase encounters the 5'-end of a downstream Okazaki fragment. Required for DNA mismatch repair (MMR). This Drosophila melanogaster (Fruit fly) protein is Exonuclease 1 (tos).